The sequence spans 727 residues: Telomere repeats-binding bouquet formation protein 1 (727 aa).

ARM repeat units follow at residues 101-144 and 339-382; these read ELFE…RETG and NGLP…GEYP. Residues 398–446 are a coiled coil; the sequence is ENNLEEHWRKAKEILHRIEQLEREGNEEEIQRENYQDNISSMNISIQNT. The segment covering 457–468 has biased composition (basic and acidic residues); sequence RGSKAEDEDKSH. The tract at residues 457–493 is disordered; that stretch reads RGSKAEDEDKSHSRQLQSYKSHGVMSKACTNDDQMKT. Positions 523 to 662 are interaction with TERF1; the sequence is QNLHEETTFE…QRLSNESTTP (140 aa). Phosphothreonine is present on threonine 648. The region spanning 666 to 719 is the Myb-like domain; that stretch reads KKRRIRKNFTEEEVNYLFNGVKKMGNHWNSILWSFPFQQGRKAVDLAHKYHKLT.

This sequence belongs to the TERB1 family. In terms of assembly, component of the MAJIN-TERB1-TERB2 complex, composed of MAJIN, TERB1 and TERB2. Interacts with TERF1, STAG3 and SUN1. Interacts (via Myb-like domain) with the cohesin complex; probably mediated via interaction with STAG3. In terms of processing, phosphorylated by CDK. Phosphorylation by CDK takes place in late prophase when the cap exchange is prominent. is important for the stabilization of telomere attachment but dispenable for the cap exchange.

It localises to the chromosome. It is found in the telomere. The protein localises to the nucleus inner membrane. Meiosis-specific telomere-associated protein involved in meiotic telomere attachment to the nucleus inner membrane, a crucial step for homologous pairing and synapsis. Component of the MAJIN-TERB1-TERB2 complex, which promotes telomere cap exchange by mediating attachment of telomeric DNA to the inner nuclear membrane and replacement of the protective cap of telomeric chromosomes: in early meiosis, the MAJIN-TERB1-TERB2 complex associates with telomeric DNA and the shelterin/telosome complex. During prophase, the complex matures and promotes release of the shelterin/telosome complex from telomeric DNA. In the MAJIN-TERB1-TERB2 complex, TERB1 probably mediates association with the shelterin/telosome complex via interaction with TERF1, promoting priming telomeric DNA attachment'. Promotes telomere association with the nuclear envelope and deposition of the SUN-KASH/LINC complex. Also recruits cohesin to telomeres to develop structural rigidity. The protein is Telomere repeats-binding bouquet formation protein 1 of Homo sapiens (Human).